Here is a 122-residue protein sequence, read N- to C-terminus: Large ribosomal subunit protein uL14 (122 aa).

It belongs to the universal ribosomal protein uL14 family. Part of the 50S ribosomal subunit. Forms a cluster with proteins L3 and L19. In the 70S ribosome, L14 and L19 interact and together make contacts with the 16S rRNA in bridges B5 and B8.

Functionally, binds to 23S rRNA. Forms part of two intersubunit bridges in the 70S ribosome. The sequence is that of Large ribosomal subunit protein uL14 from Lysinibacillus sphaericus (strain C3-41).